We begin with the raw amino-acid sequence, 530 residues long: UDP-glucuronosyltransferase 2B15 (530 aa).

A signal peptide spans 1–23 (MSGKWISALLLLQISFCFKSGNC). An N-linked (GlcNAc...) asparagine glycan is attached at N316. Residues 494-510 (VIGFLLSCVAVTVVLAL) traverse the membrane as a helical segment.

Belongs to the UDP-glycosyltransferase family. In terms of processing, N-glycosylated. In terms of tissue distribution, liver. Lower levels seen in the kidney and testis.

It is found in the endoplasmic reticulum membrane. The catalysed reaction is glucuronate acceptor + UDP-alpha-D-glucuronate = acceptor beta-D-glucuronoside + UDP + H(+). It catalyses the reaction 17alpha-estradiol + UDP-alpha-D-glucuronate = 17alpha-estradiol 3-O-(beta-D-glucuronate) + UDP + H(+). The enzyme catalyses 16alpha,17alpha-estriol + UDP-alpha-D-glucuronate = 16alpha,17alpha-estriol 3-O-(beta-D-glucuronate) + UDP + H(+). It carries out the reaction 17beta-hydroxy-5alpha-androstan-3-one + UDP-alpha-D-glucuronate = 5alpha-dihydrotestosterone 17-O-(beta-D-glucuronate) + UDP + H(+). In terms of biological role, UDP-glucuronosyltransferase (UGT) that catalyzes phase II biotransformation reactions in which lipophilic substrates are conjugated with glucuronic acid to increase the metabolite's water solubility, thereby facilitating excretion into either the urine or bile. Essential for the elimination and detoxification of drugs, xenobiotics and endogenous compounds. Catalyzes the glucuronidation of endogenous steroid hormones such as androgens (testosterone, androsterone) and estrogens (estradiol, epiestradiol, estriol, catechol estrogens). Displays glucuronidation activity toward several classes of xenoblotic substrates, including phenolic compounds (eugenol, 4-nitrophenol, 4-hydroxybiphenyl) and phenylpropanoids (naringenin, coumarins). Catalyzes the glucuronidation of monoterpenoid alcohols such as borneol, menthol and isomenthol, a class of natural compounds used in essential oils. This Rattus norvegicus (Rat) protein is UDP-glucuronosyltransferase 2B15.